The sequence spans 523 residues: 2-isopropylmalate synthase (523 aa).

Residues 5–267 enclose the Pyruvate carboxyltransferase domain; the sequence is VIIFDTTLRD…HTNINHHEIW (263 aa). 4 residues coordinate Mn(2+): aspartate 14, histidine 202, histidine 204, and asparagine 238. Residues 392 to 523 are regulatory domain; that stretch reads RLDYFNVQSG…QNKENNKETV (132 aa).

It belongs to the alpha-IPM synthase/homocitrate synthase family. LeuA type 1 subfamily. As to quaternary structure, homodimer. Requires Mn(2+) as cofactor.

Its subcellular location is the cytoplasm. The catalysed reaction is 3-methyl-2-oxobutanoate + acetyl-CoA + H2O = (2S)-2-isopropylmalate + CoA + H(+). It participates in amino-acid biosynthesis; L-leucine biosynthesis; L-leucine from 3-methyl-2-oxobutanoate: step 1/4. Catalyzes the condensation of the acetyl group of acetyl-CoA with 3-methyl-2-oxobutanoate (2-ketoisovalerate) to form 3-carboxy-3-hydroxy-4-methylpentanoate (2-isopropylmalate). The chain is 2-isopropylmalate synthase from Klebsiella pneumoniae subsp. pneumoniae (strain ATCC 700721 / MGH 78578).